The following is an 88-amino-acid chain: Small ribosomal subunit protein eS21 (88 aa).

Belongs to the eukaryotic ribosomal protein eS21 family. In terms of assembly, component of the 40S small ribosomal subunit.

The protein localises to the cytoplasm. The protein resides in the cytosol. It localises to the rough endoplasmic reticulum. The polypeptide is Small ribosomal subunit protein eS21 (rps-21) (Caenorhabditis elegans).